We begin with the raw amino-acid sequence, 479 residues long: Poly(A) polymerase catalytic subunit (479 aa).

Catalysis depends on residues aspartate 202 and aspartate 204. Ca(2+)-binding residues include aspartate 202, aspartate 204, and aspartate 253.

This sequence belongs to the poxviridae poly(A) polymerase catalytic subunit family. In terms of assembly, heterodimer of a large (catalytic) subunit and a small (regulatory) subunit.

The catalysed reaction is RNA(n) + ATP = RNA(n)-3'-adenine ribonucleotide + diphosphate. In terms of biological role, polymerase that creates the 3'-poly(A) tail of mRNA's. In Camelus, this protein is Poly(A) polymerase catalytic subunit (OPG063).